Reading from the N-terminus, the 105-residue chain is Small ribosomal subunit protein uS10c (105 aa).

It belongs to the universal ribosomal protein uS10 family. Part of the 30S ribosomal subunit.

It localises to the plastid. It is found in the chloroplast. In terms of biological role, involved in the binding of tRNA to the ribosomes. The polypeptide is Small ribosomal subunit protein uS10c (Gracilaria tenuistipitata var. liui (Red alga)).